A 203-amino-acid chain; its full sequence is Small ribosomal subunit protein uS4 (203 aa).

Residues 92–152 (LRLATVLLRA…EKSRKLVPFI (61 aa)) form the S4 RNA-binding domain.

It belongs to the universal ribosomal protein uS4 family. Part of the 30S ribosomal subunit. Contacts protein S5. The interaction surface between S4 and S5 is involved in control of translational fidelity.

Its function is as follows. One of the primary rRNA binding proteins, it binds directly to 16S rRNA where it nucleates assembly of the body of the 30S subunit. In terms of biological role, with S5 and S12 plays an important role in translational accuracy. The chain is Small ribosomal subunit protein uS4 from Thermobifida fusca (strain YX).